The primary structure comprises 145 residues: Putative sterol 14-demethylase-like protein (145 aa).

Residues 5–25 (YYTLLKTSVAIIIVFVVAKLI) form a helical membrane-spanning segment.

This sequence belongs to the cytochrome P450 family. As to expression, expressed specifically in roots.

The protein localises to the membrane. The protein is Putative sterol 14-demethylase-like protein (CYP51G2) of Arabidopsis thaliana (Mouse-ear cress).